Here is a 74-residue protein sequence, read N- to C-terminus: Progonadoliberin-3 (74 aa).

Positions 1–15 (VRVVVLALVAQVTLS) are cleaved as a signal peptide. Gln16 is modified (pyrrolidone carboxylic acid). Gly25 is subject to Glycine amide.

It belongs to the GnRH family.

It is found in the secreted. Its function is as follows. Stimulates the secretion of gonadotropins. The protein is Progonadoliberin-3 (gnrh3) of Oncorhynchus tshawytscha (Chinook salmon).